A 462-amino-acid chain; its full sequence is Argininosuccinate lyase (462 aa).

The protein belongs to the lyase 1 family. Argininosuccinate lyase subfamily.

It localises to the cytoplasm. It catalyses the reaction 2-(N(omega)-L-arginino)succinate = fumarate + L-arginine. The protein operates within amino-acid biosynthesis; L-arginine biosynthesis; L-arginine from L-ornithine and carbamoyl phosphate: step 3/3. The sequence is that of Argininosuccinate lyase from Lachnoclostridium phytofermentans (strain ATCC 700394 / DSM 18823 / ISDg) (Clostridium phytofermentans).